A 98-amino-acid polypeptide reads, in one-letter code: NADH-ubiquinone oxidoreductase chain 4L (98 aa).

3 helical membrane-spanning segments follow: residues Met1–Met21, Ala29–Leu49, and Ile61–Ile81.

It belongs to the complex I subunit 4L family. As to quaternary structure, core subunit of respiratory chain NADH dehydrogenase (Complex I) which is composed of 45 different subunits.

It is found in the mitochondrion inner membrane. The catalysed reaction is a ubiquinone + NADH + 5 H(+)(in) = a ubiquinol + NAD(+) + 4 H(+)(out). Core subunit of the mitochondrial membrane respiratory chain NADH dehydrogenase (Complex I) which catalyzes electron transfer from NADH through the respiratory chain, using ubiquinone as an electron acceptor. Part of the enzyme membrane arm which is embedded in the lipid bilayer and involved in proton translocation. This chain is NADH-ubiquinone oxidoreductase chain 4L (MT-ND4L), found in Berardius bairdii (Baird's beaked whale).